The chain runs to 294 residues: Pyridoxal 5'-phosphate synthase subunit PdxS (294 aa).

Asp24 lines the D-ribose 5-phosphate pocket. Lys81 acts as the Schiff-base intermediate with D-ribose 5-phosphate in catalysis. Gly153 serves as a coordination point for D-ribose 5-phosphate. Arg165 is a D-glyceraldehyde 3-phosphate binding site. Residues Gly214 and 235–236 (GS) each bind D-ribose 5-phosphate.

This sequence belongs to the PdxS/SNZ family. As to quaternary structure, in the presence of PdxT, forms a dodecamer of heterodimers.

It catalyses the reaction aldehydo-D-ribose 5-phosphate + D-glyceraldehyde 3-phosphate + L-glutamine = pyridoxal 5'-phosphate + L-glutamate + phosphate + 3 H2O + H(+). It participates in cofactor biosynthesis; pyridoxal 5'-phosphate biosynthesis. In terms of biological role, catalyzes the formation of pyridoxal 5'-phosphate from ribose 5-phosphate (RBP), glyceraldehyde 3-phosphate (G3P) and ammonia. The ammonia is provided by the PdxT subunit. Can also use ribulose 5-phosphate and dihydroxyacetone phosphate as substrates, resulting from enzyme-catalyzed isomerization of RBP and G3P, respectively. The chain is Pyridoxal 5'-phosphate synthase subunit PdxS from Anoxybacillus flavithermus (strain DSM 21510 / WK1).